The sequence spans 908 residues: MPPRRSIVEVKVLDVQKRRVPNKHYVYIIRVTWSSGATEAIYRRYSKFFDLQMQMLDKFPMEGGQKDPKQRIIPFLPGKILFRRSHIRDVAVKRLIPIDEYCKALIQLPPYISQCDEVLQFFETRPEDLNPPKEEHIGKKKSGNDPTSVDPMVLEQYVVVADYQKQESSEISLSVGQVVDIIEKNESGWWFVSTAEEQGWVPATCLEGQDGVQDEFSLQPEEEEKYTVIYPYTARDQDEMNLERGAVVEVVQKNLEGWWKIRYQGKEGWAPASYLKKNSGEPLPPKLGPSSPAHSGALDLDGVSRHQNAMGREKELLNNQRDGRFEGRLVPDGDVKQRSPKMRQRPPPRRDMTIPRGLNLPKPPIPPQVEEEYYTIAEFQTTIPDGISFQAGLKVEVIEKSLSGWWYIQMEDKEGWAPATFIDKYKKTSSASRPNFLAPLPHEMTQLRLGDAAATENNTGPEAVGPSRPLPEAPHGAVDSGMLWSKDWKGGKEAPRKASSDLSASTGYEEISDPTQEEKPSLPPRKESIIKSEEELLERERQKMEPLRGSSPKPPGMILPMIPAKHAPLARDSRKPEPKLDKSKFPLRNDMGLECGHKVLAKEVKKPNLRPISRSKAELSEEKVDPTSQNLFMKSRPQVRPKPTPSPKTEPAQSEDHVDIYNLRSKLRPAKSQEKALLDGESHHAAGSHDTALSRSFLPGEGPGHGQDRSGRQDGLSPKETPCRAPPRPAKTTDPGPKNVPVPVQEATLQQRPVVPPRRPPPPKKTSSSPLSCRPLPEVRGAQREESRVAPAAGRALLVPPKAKPFLSNSSVGQDDMRGKGGLGPRVTGKVGETREKAASFLNADGPKDSLYVAVANFEGDEDTSSFQEGTVFEVREKNSSGWWFCQVLSGAPSWEGWIPSNYLRKKP.

One can recognise a PX domain in the interval 5–129; that stretch reads RSIVEVKVLD…QFFETRPEDL (125 aa). Y25 is subject to Phosphotyrosine. SH3 domains lie at 152–211 and 221–280; these read MVLE…GQDG and EEEE…KNSG. Phosphoserine occurs at positions 279 and 291. Disordered regions lie at residues 280 to 300 and 315 to 366; these read GEPLPPKLGPSSPAHSGALDL and ELLN…PPIP. The segment covering 315–337 has biased composition (basic and acidic residues); the sequence is ELLNNQRDGRFEGRLVPDGDVKQ. Residues 338–347 are compositionally biased toward basic residues; that stretch reads RSPKMRQRPP. An SH3 3 domain is found at 368-427; that stretch reads QVEEEYYTIAEFQTTIPDGISFQAGLKVEVIEKSLSGWWYIQMEDKEGWAPATFIDKYKK. The disordered stretch occupies residues 455–832; the sequence is TENNTGPEAV…LGPRVTGKVG (378 aa). Basic and acidic residues-rich tracts occupy residues 486-499, 516-546, 569-584, 595-606, and 615-625; these read KDWKGGKEAPRKAS, QEEKPSLPPRKESIIKSEEELLERERQKMEP, LARDSRKPEPKLDKSK, CGHKVLAKEVKK, and SKAELSEEKVD. 2 positions are modified to phosphoserine: S499 and S528. Residue Y661 is modified to Phosphotyrosine. Positions 671 to 684 are enriched in basic and acidic residues; that stretch reads KSQEKALLDGESHH. The segment covering 754 to 764 has biased composition (pro residues); sequence VVPPRRPPPPK. The residue at position 840 (S840) is a Phosphoserine. Positions 847 to 908 constitute an SH3 4 domain; sequence PKDSLYVAVA…IPSNYLRKKP (62 aa).

Belongs to the SH3PXD2 family. Interacts with NOXO1. Interacts (via SH3 domains) with NOXA1; the interaction is direct. Interacts with ADAM15. Interacts with FASLG. Phosphorylated in SRC-transformed cells. Highly expressed in the stromal-vascular fraction of white adipose tissue with moderate expression in heart, skeletal muscle and the mature adipocyte fraction of white adipose tissue. Also expressed in brain, spleen, kidney and liver. Expressed in white and brown adipose tissues, eye, lung, heart, brain, spleen, stomach, liver and skeletal muscle (at protein level). Not expressed in kidney or bone marrow.

It localises to the cytoplasm. It is found in the cell projection. Its subcellular location is the podosome. In terms of biological role, adapter protein involved in invadopodia and podosome formation and extracellular matrix degradation. Binds matrix metalloproteinases (ADAMs), NADPH oxidases (NOXs) and phosphoinositides. Acts as an organizer protein that allows NOX1- or NOX3-dependent reactive oxygen species (ROS) generation and ROS localization. Plays a role in mitotic clonal expansion during the immediate early stage of adipocyte differentiation. This Mus musculus (Mouse) protein is SH3 and PX domain-containing protein 2B (Sh3pxd2b).